Reading from the N-terminus, the 356-residue chain is Phenylalanine dehydrogenase (356 aa).

An NAD(+)-binding site is contributed by arginine 43. Lysine 67 is a binding site for L-phenylalanine. Residue lysine 79 is the Proton donor/acceptor of the active site. 118-119 contributes to the L-phenylalanine binding site; it reads PD. Residues aspartate 119, serine 150, threonine 154, 183–189, 206–207, arginine 211, 240–241, and 261–263 each bind NAD(+); these read GLGAVGG, DT, AM, and AAN. An L-phenylalanine-binding site is contributed by asparagine 263.

This sequence belongs to the Glu/Leu/Phe/Val dehydrogenases family. In terms of assembly, homotetramer, dimer of dimers.

The enzyme catalyses L-phenylalanine + NAD(+) + H2O = 3-phenylpyruvate + NH4(+) + NADH + H(+). It functions in the pathway amino-acid biosynthesis; L-phenylalanine biosynthesis; L-phenylalanine from phenylpyruvate (PDH route): step 1/1. Subject to competitive inhibition by 3-phenylpropionate for the conversion of L-phenylalanine to phenylpyruvate. Subject to competitive inhibition by D-phenylalanine for the conversion of phenylpyruvate to L-phenylalanine. In terms of biological role, catalyzes the reversible NAD(+)-dependent oxidative deamination of L-phenylalanine to phenylpyruvate. This is Phenylalanine dehydrogenase from Rhodococcus sp.